The primary structure comprises 917 residues: Protein translocase subunit SecA (917 aa).

Residues Q87, 105-109, and D516 each bind ATP; that span reads GEGKT. Residues C901, C903, C912, and H913 each coordinate Zn(2+).

It belongs to the SecA family. In terms of assembly, monomer and homodimer. Part of the essential Sec protein translocation apparatus which comprises SecA, SecYEG and auxiliary proteins SecDF-YajC and YidC. Requires Zn(2+) as cofactor.

Its subcellular location is the cell inner membrane. The protein resides in the cytoplasm. It carries out the reaction ATP + H2O + cellular proteinSide 1 = ADP + phosphate + cellular proteinSide 2.. Part of the Sec protein translocase complex. Interacts with the SecYEG preprotein conducting channel. Has a central role in coupling the hydrolysis of ATP to the transfer of proteins into and across the cell membrane, serving both as a receptor for the preprotein-SecB complex and as an ATP-driven molecular motor driving the stepwise translocation of polypeptide chains across the membrane. This is Protein translocase subunit SecA from Acidovorax ebreus (strain TPSY) (Diaphorobacter sp. (strain TPSY)).